The chain runs to 233 residues: Orotidine 5'-phosphate decarboxylase (233 aa).

Substrate contacts are provided by residues Asp13, Lys35, 62–71 (DLKFHDIPNT), Thr122, Arg182, Gln191, Gly211, and Arg212. Lys64 serves as the catalytic Proton donor.

The protein belongs to the OMP decarboxylase family. Type 1 subfamily. Homodimer.

It catalyses the reaction orotidine 5'-phosphate + H(+) = UMP + CO2. The protein operates within pyrimidine metabolism; UMP biosynthesis via de novo pathway; UMP from orotate: step 2/2. Functionally, catalyzes the decarboxylation of orotidine 5'-monophosphate (OMP) to uridine 5'-monophosphate (UMP). This Pseudomonas fluorescens (strain ATCC BAA-477 / NRRL B-23932 / Pf-5) protein is Orotidine 5'-phosphate decarboxylase.